The primary structure comprises 294 residues: Kynurenine formamidase (294 aa).

Over residues 1 to 14 (MSRWKDMNKDELER) the composition is skewed to basic and acidic residues. The segment at 1 to 20 (MSRWKDMNKDELERQFSPSQ) is disordered. Residues 84 to 88 (HGGYW) carry the HGGXW motif. S153 serves as the catalytic Nucleophile. Catalysis depends on residues D236 and H269.

This sequence belongs to the kynurenine formamidase family. In terms of assembly, homodimer.

The protein localises to the cytoplasm. It localises to the cytosol. It is found in the nucleus. It carries out the reaction N-formyl-L-kynurenine + H2O = L-kynurenine + formate + H(+). Its pathway is amino-acid degradation; L-tryptophan degradation via kynurenine pathway; L-kynurenine from L-tryptophan: step 2/2. In terms of biological role, catalyzes the hydrolysis of N-formyl-L-kynurenine to L-kynurenine, the second step in the kynurenine pathway of tryptophan degradation. Kynurenine may be further oxidized to nicotinic acid, NAD(H) and NADP(H). Required for elimination of toxic metabolites. The chain is Kynurenine formamidase (afmid) from Salmo salar (Atlantic salmon).